We begin with the raw amino-acid sequence, 700 residues long: MRSRVPLQILLYAAVIRSLKVVSKRGSVDGCTDWSVDYLRYRVLLGEPVRIKCALFYGYIRANYTHAQSAGLSLMWYRSATHTDHEEPITLDGTRTLKEEDALWFRPAQLQDSGHYSCVLRNSSYCMKVSMALTVAENSSGLCYNSKMRRLEKAELSKSKDILCPDIQDYTPAGSEPHVTWYKECRPKQWRSSIIRTADLLSIRDVREDDIGNYTCEIQFGRFLVRRTTELTVTAPLTDKPPKILQPPEHKLSVMELQLGGPVNLTCRAFFGYSGDVSPLIYWMKGEKFIEDLDETRIRESEIKMVREHLGEQEVSVSLTIDSLQEEDLGNYSCYVENGHGRRHAIIQLSRRELMYTVELAGGLGAILLMLIFLVSLYKCYRIELMLFYRNHFGSEDVDGENKDYDAYVSYTKVDPDQWSQETREEEHFALEILPDMLEKHYGYKLFIPDRDLIPTGTYIEDVARCVDQSKRLIIVMTPNYVVRRGWSIFELETRLRNMLVSGEIKVILIECSDLRGIMNYQEVEALKHTIKLLTVIRWPGPGSSKPNSRFWKQLQYEMPFRRPEPKLSHEQVLDASEQGPFGELQTVSALSMVSATSTAMATAHPDLRSGFHNTYNTQLRQKHYYRGYEYDIPSSGTLPPLATMGSQHTYCNIPMSLLNGQRPPGQPAHGQQQSLEEQQVNNALLPLLPRETSISSVIW.

A signal peptide spans 1–18 (MRSRVPLQILLYAAVIRS). The Extracellular portion of the chain corresponds to 19–357 (LKVVSKRGSV…QLSRRELMYT (339 aa)). Residues 32-134 (TDWSVDYLRY…YCMKVSMALT (103 aa)) enclose the Ig-like C2-type 1 domain. Cysteines 53 and 118 form a disulfide. N-linked (GlcNAc...) asparagine glycans are attached at residues Asn-63, Asn-122, Asn-138, Asn-213, Asn-264, and Asn-331. Ig-like C2-type domains follow at residues 143–232 (CYNS…TELT) and 242–350 (PKIL…IQLS). Cys-164 and Cys-216 are disulfide-bonded. Cys-267 and Cys-334 are oxidised to a cystine. Residues 358 to 378 (VELAGGLGAILLMLIFLVSLY) form a helical membrane-spanning segment. Over 379–700 (KCYRIELMLF…RETSISSVIW (322 aa)) the chain is Cytoplasmic. In terms of domain architecture, TIR spans 403–559 (KDYDAYVSYT…RFWKQLQYEM (157 aa)). Glu-491 is an active-site residue. Positions 564-700 (PEPKLSHEQV…RETSISSVIW (137 aa)) are required for synaptic vesicle accumulation during synaptogenesis.

It belongs to the interleukin-1 receptor family.

The protein localises to the cell membrane. The protein resides in the cytoplasm. The enzyme catalyses NAD(+) + H2O = ADP-D-ribose + nicotinamide + H(+). In terms of biological role, may regulate secretion and presynaptic differentiation through inhibition of the activity of N-type voltage-gated calcium channel. During presynaptic differentiation may regulate both synaptic vesicle accumulation in axon terminals and subsequent axon terminal remodeling. The chain is Interleukin-1 receptor accessory protein-like 1-B (il1rapl1b) from Danio rerio (Zebrafish).